The chain runs to 253 residues: Triosephosphate isomerase (253 aa).

9-11 provides a ligand contact to substrate; it reads NWK. The active-site Electrophile is the His-96. The Proton acceptor role is filled by Glu-169. Residues Gly-175, Ser-215, and 236–237 each bind substrate; that span reads GG.

This sequence belongs to the triosephosphate isomerase family. Homodimer.

It is found in the cytoplasm. The enzyme catalyses D-glyceraldehyde 3-phosphate = dihydroxyacetone phosphate. It participates in carbohydrate biosynthesis; gluconeogenesis. Its pathway is carbohydrate degradation; glycolysis; D-glyceraldehyde 3-phosphate from glycerone phosphate: step 1/1. Its function is as follows. Involved in the gluconeogenesis. Catalyzes stereospecifically the conversion of dihydroxyacetone phosphate (DHAP) to D-glyceraldehyde-3-phosphate (G3P). The protein is Triosephosphate isomerase of Borreliella burgdorferi (strain ZS7) (Borrelia burgdorferi).